Here is a 609-residue protein sequence, read N- to C-terminus: Proteasome-associated ATPase (609 aa).

The segment at 1 to 27 (MGSSERSEAFGTPRESDMSSGDEAELE) is disordered. A coiled-coil region spans residues 17–96 (DMSSGDEAEL…LREEVDRLGQ (80 aa)). 296–301 (GCGKTL) serves as a coordination point for ATP. The docks into pockets in the proteasome alpha-ring stretch occupies residues 608–609 (YL).

This sequence belongs to the AAA ATPase family. In terms of assembly, homohexamer. Assembles into a hexameric ring structure that caps the 20S proteasome core. Strongly interacts with the prokaryotic ubiquitin-like protein Pup through a hydrophobic interface; the interacting region of ARC lies in its N-terminal coiled-coil domain. There is one Pup binding site per ARC hexamer ring. Upon ATP-binding, the C-terminus of ARC interacts with the alpha-rings of the proteasome core, possibly by binding to the intersubunit pockets.

It participates in protein degradation; proteasomal Pup-dependent pathway. Its function is as follows. ATPase which is responsible for recognizing, binding, unfolding and translocation of pupylated proteins into the bacterial 20S proteasome core particle. May be essential for opening the gate of the 20S proteasome via an interaction with its C-terminus, thereby allowing substrate entry and access to the site of proteolysis. Thus, the C-termini of the proteasomal ATPase may function like a 'key in a lock' to induce gate opening and therefore regulate proteolysis. The sequence is that of Proteasome-associated ATPase from Mycobacterium avium (strain 104).